Consider the following 353-residue polypeptide: MPEQFAVPRSVEWEETSVKILNQQKLPEKTEYLHLTTKEDIYDAIQTLKVRGAPAIGITAAFGLALCAQSIDTSDVSAFLRELRKIKDELNQARPTAVNLSWALNRLLKSAEGAKSVNEAKTNLVHEAIQIQVEDEETCRQIGQNALHLFKSGDSIMTICNAGSIATSRYGTALSPFYLAKTKDLDLHIYACETRPVLQGARLTAWELMQGGIDVTLITDSMAAHTMKEKNISAVIVGADRIARNGDTANKIGTFGLAILAKAFQIPFFIAAPLSTFDVSISCGDDIPIEERDPDEVRRINGTQIAPQEVPVFNPAFDITPHDLISGIITEKGIITDRFEEEIEALFSAEALT.

Substrate-binding positions include 51–53 (RGA), Arg94, and Gln199. Asp240 (proton donor) is an active-site residue. 250–251 (NK) provides a ligand contact to substrate.

It belongs to the eIF-2B alpha/beta/delta subunits family. MtnA subfamily. Homodimer.

The enzyme catalyses 5-(methylsulfanyl)-alpha-D-ribose 1-phosphate = 5-(methylsulfanyl)-D-ribulose 1-phosphate. Its pathway is amino-acid biosynthesis; L-methionine biosynthesis via salvage pathway; L-methionine from S-methyl-5-thio-alpha-D-ribose 1-phosphate: step 1/6. Functionally, catalyzes the interconversion of methylthioribose-1-phosphate (MTR-1-P) into methylthioribulose-1-phosphate (MTRu-1-P). This Bacillus licheniformis (strain ATCC 14580 / DSM 13 / JCM 2505 / CCUG 7422 / NBRC 12200 / NCIMB 9375 / NCTC 10341 / NRRL NRS-1264 / Gibson 46) protein is Methylthioribose-1-phosphate isomerase.